The primary structure comprises 54 residues: uncharacterized protein (54 aa).

A helical membrane pass occupies residues 21–43 (SYVVCLYMCGSDCACICVLACVV).

The protein localises to the membrane. This is an uncharacterized protein from Saccharomyces cerevisiae (strain ATCC 204508 / S288c) (Baker's yeast).